We begin with the raw amino-acid sequence, 209 residues long: Uracil phosphoribosyltransferase (209 aa).

5-phospho-alpha-D-ribose 1-diphosphate contacts are provided by residues arginine 79, arginine 104, and 131-139 (DPMLATGGS). Residues isoleucine 194 and 199-201 (GDA) contribute to the uracil site. Position 200 (aspartate 200) interacts with 5-phospho-alpha-D-ribose 1-diphosphate.

Belongs to the UPRTase family. Mg(2+) serves as cofactor.

It carries out the reaction UMP + diphosphate = 5-phospho-alpha-D-ribose 1-diphosphate + uracil. The protein operates within pyrimidine metabolism; UMP biosynthesis via salvage pathway; UMP from uracil: step 1/1. Allosterically activated by GTP. Catalyzes the conversion of uracil and 5-phospho-alpha-D-ribose 1-diphosphate (PRPP) to UMP and diphosphate. The sequence is that of Uracil phosphoribosyltransferase from Lactiplantibacillus plantarum (strain ATCC BAA-793 / NCIMB 8826 / WCFS1) (Lactobacillus plantarum).